Here is a 791-residue protein sequence, read N- to C-terminus: Major facilitator superfamily domain-containing protein 6 (791 aa).

At Ala2 the chain carries N-acetylalanine. The residue at position 10 (Thr10) is a Phosphothreonine. A disordered region spans residues 22-47 (LADPFNGISREPEPPSNETPSSTETS). Low complexity predominate over residues 37-47 (SNETPSSTETS). Transmembrane regions (helical) follow at residues 73 to 93 (VFYF…PVYY), 105 to 125 (LLVG…GVVA), 132 to 152 (KIVL…IGFV), 286 to 306 (AIFL…ASSV), 335 to 355 (WGLA…EVLI), and 369 to 389 (QIVF…ATQF). The tract at residues 407–427 (EIPQVERNNSTESSEETPTTT) is disordered. Residues 416-427 (STESSEETPTTT) show a composition bias toward low complexity. 6 consecutive transmembrane segments (helical) span residues 450–470 (VLFV…FLYW), 479–499 (TTLF…AYFF), 507–527 (IGHI…YIYI), 544–564 (GVTH…AVPP), 579–599 (LGLG…YFGA), and 605–625 (GIGM…WLAV). 2 disordered regions span residues 662–687 (MPRI…NKPA) and 723–791 (LQGT…AGGH). The span at 750-768 (SRNQPSPDAAASQTQTSPA) shows a compositional bias: polar residues. The span at 782–791 (QQAQLAAGGH) shows a compositional bias: low complexity.

It belongs to the major facilitator superfamily. MFSD6 family. As to quaternary structure, may interact with HLA-B62. Widely expressed. Expression levels in peripheral blood mononuclear cells are highly variable between individuals, including no expression at all.

The protein localises to the membrane. This Homo sapiens (Human) protein is Major facilitator superfamily domain-containing protein 6 (MFSD6).